A 229-amino-acid chain; its full sequence is MIKPVPVITIDGPSGSGKGTVAALLAGKLGWNFLDSGALYRLLAFAARNHGVDLTNEEALKVLAEHLDVQFGAARDGHGMVIILEGEDVTEAIRNETVGAGASQVAALPVVRTALLQRQKAFREAPGLVADGRDMGTVVFPDAPLKIFLTASAEERARRRYLQLKARGDDVNLASLLEEIRERDERDTQRAVAPLKPAEDAIQLDSTTLSIEEVLQRILSEVADRDLAG.

12-20 contributes to the ATP binding site; that stretch reads GPSGSGKGT.

It belongs to the cytidylate kinase family. Type 1 subfamily.

Its subcellular location is the cytoplasm. It carries out the reaction CMP + ATP = CDP + ADP. The catalysed reaction is dCMP + ATP = dCDP + ADP. The chain is Cytidylate kinase from Stutzerimonas stutzeri (strain A1501) (Pseudomonas stutzeri).